The primary structure comprises 470 residues: ATP synthase subunit beta (470 aa).

An ATP-binding site is contributed by 157–164 (GGAGVGKT).

The protein belongs to the ATPase alpha/beta chains family. As to quaternary structure, F-type ATPases have 2 components, CF(1) - the catalytic core - and CF(0) - the membrane proton channel. CF(1) has five subunits: alpha(3), beta(3), gamma(1), delta(1), epsilon(1). CF(0) has three main subunits: a(1), b(2) and c(9-12). The alpha and beta chains form an alternating ring which encloses part of the gamma chain. CF(1) is attached to CF(0) by a central stalk formed by the gamma and epsilon chains, while a peripheral stalk is formed by the delta and b chains.

It localises to the cell inner membrane. It carries out the reaction ATP + H2O + 4 H(+)(in) = ADP + phosphate + 5 H(+)(out). Functionally, produces ATP from ADP in the presence of a proton gradient across the membrane. The catalytic sites are hosted primarily by the beta subunits. The sequence is that of ATP synthase subunit beta from Geotalea uraniireducens (strain Rf4) (Geobacter uraniireducens).